The sequence spans 1009 residues: Serine/threonine-protein phosphatase BSL2 homolog (1009 aa).

Positions 1 to 48 (MDVDSRMTTESDSDSDAAAQGGGGGGFGSETSSASPSAPGTPTAMGAG) are disordered. Over residues 29 to 45 (SETSSASPSAPGTPTAM) the composition is skewed to low complexity. Kelch repeat units lie at residues 136-182 (SSAG…VATA), 240-288 (FLLT…TASA), 293-344 (LLLL…FVNA), 349-396 (SGGA…DAAG), and 417-463 (MIYV…IQAG). The tract at residues 549–572 (QVNGEAEHSPDREQSPDATPSVKQ) is disordered. Over residues 553–563 (EAEHSPDREQS) the composition is skewed to basic and acidic residues. Residues D711, H713, D745, and N777 each contribute to the Mn(2+) site. The active-site Proton donor is H778. Mn(2+) contacts are provided by H830 and H909. Residues 984–1009 (NANRPPTPTRGRPQAANNDRGSLAWI) form a disordered region.

This sequence belongs to the PPP phosphatase family. BSU subfamily. The cofactor is Mn(2+).

The protein resides in the nucleus. It carries out the reaction O-phospho-L-seryl-[protein] + H2O = L-seryl-[protein] + phosphate. The enzyme catalyses O-phospho-L-threonyl-[protein] + H2O = L-threonyl-[protein] + phosphate. This is Serine/threonine-protein phosphatase BSL2 homolog (BSL2) from Oryza sativa subsp. japonica (Rice).